Reading from the N-terminus, the 118-residue chain is UPF0102 protein Lxx14785 (118 aa).

The protein belongs to the UPF0102 family.

The sequence is that of UPF0102 protein Lxx14785 from Leifsonia xyli subsp. xyli (strain CTCB07).